The following is a 427-amino-acid chain: MSAIVDIIGREVIDSRGNPTVECDVLLESGVMGRAAVPSGASTGSREAIELRDGDKSRYFGKGVLKACEHINTEISEAIMGLDANEQAFLDRTLIDLDGTENKARLGANATLAVSMAVAKAAAEESGLPLYRYFGGSGAMQMPVPMMNVINGGAHANNNLDLQEFMIIPVGAPSFREAIRYGAEVFHTLKKIINDKGLPTSVGDEGGFAPSVENHEAAIKLILQAIEQAGYEPGTQIALGLDCAASEFYKDGKYHLAGEGMTLSSADFTNLLGTWCDKYPIISIEDGMAENDWDGWATLTNALGKKVQLVGDDLFVTNTKILREGIQKNIANSILIKINQIGTLTETFAAIEMAKRAGYTAVISHRSGETEDSTIADIAVGTNSLQIKTGSMSRSDRMAKYNQLLRIEEDLGDIASYPGRGAFYNLK.

Position 163 (Gln163) interacts with (2R)-2-phosphoglycerate. The active-site Proton donor is the Glu205. Asp242, Glu285, and Asp312 together coordinate Mg(2+). 4 residues coordinate (2R)-2-phosphoglycerate: Lys337, Arg366, Ser367, and Lys388. Lys337 (proton acceptor) is an active-site residue.

Belongs to the enolase family. Mg(2+) serves as cofactor.

It is found in the cytoplasm. The protein localises to the secreted. Its subcellular location is the cell surface. It catalyses the reaction (2R)-2-phosphoglycerate = phosphoenolpyruvate + H2O. It functions in the pathway carbohydrate degradation; glycolysis; pyruvate from D-glyceraldehyde 3-phosphate: step 4/5. Functionally, catalyzes the reversible conversion of 2-phosphoglycerate (2-PG) into phosphoenolpyruvate (PEP). It is essential for the degradation of carbohydrates via glycolysis. The chain is Enolase from Janthinobacterium sp. (strain Marseille) (Minibacterium massiliensis).